The sequence spans 183 residues: Tail fiber assembly protein (183 aa).

The protein belongs to the tfa family.

Functionally, chaperone involved, together with gp57, in the assembly of the distal-half tail fiber of T4. It is necessary for the maturation of protein gp37 to the dimeric structural subunit P37. This Escherichia coli (Bacteriophage T4) protein is Tail fiber assembly protein (38).